Reading from the N-terminus, the 437-residue chain is Oxysterol-binding protein homolog 7 (437 aa).

Polar residues predominate over residues 23–32; the sequence is IASNAANSKP. A disordered region spans residues 23–42; the sequence is IASNAANSKPSGADTDDIDE. The OSBP-related domain (ORD) stretch occupies residues 54–393; that stretch reads IISQLKPGCD…EDLDYYIYKH (340 aa). Residues 64 to 69, 126 to 129, and 157 to 158 contribute to the a 1,2-diacyl-sn-glycero-3-phospho-(1D-myo-inositol 4-phosphate) site; these read LSRITL, KPLN, and HH. A 1,2-diacyl-sn-glycero-3-phospho-L-serine-binding positions include 64-69 and Asn129; that span reads LSRITL. Ser183 is a binding site for a 1,2-diacyl-sn-glycero-3-phospho-L-serine. A Glycyl lysine isopeptide (Lys-Gly) (interchain with G-Cter in ubiquitin) cross-link involves residue Lys276. A 1,2-diacyl-sn-glycero-3-phospho-(1D-myo-inositol 4-phosphate) contacts are provided by Lys351, Glu355, and Arg359.

The protein belongs to the OSBP family. As to quaternary structure, interacts with the AAA ATPase VPS4; regulates OSH7 membrane association. VPS4 is required for membrane dissociation of OSH7.

The protein resides in the cytoplasm. It localises to the cell membrane. It is found in the endoplasmic reticulum membrane. The enzyme catalyses a 1,2-diacyl-sn-glycero-3-phospho-L-serine(in) = a 1,2-diacyl-sn-glycero-3-phospho-L-serine(out). Functionally, ipid transport protein (LTP) involved in non-vesicular transfer of lipids between membranes. Functions in phosphoinositide-coupled directional transport of various lipids by carrying the lipid molecule in a hydrophobic pocket and transferring it between membranes through the cytosol. Involved in maintenance of intracellular sterol distribution and homeostasis. Involved in lipid countertransport between the endoplasmic reticulum and the plasma membrane. Specifically exchanges phosphatidylserine with phosphatidylinositol 4-phosphate (PI4P), delivering phosphatidylserine to the PM in exchange for PI4P, which is delivered to the ER-localized PI4P phosphatase SAC1 for degradation. Thus, by maintaining a PI4P gradient at the ER/PM interface, SAC1 drives PS transport. Binds phosphatidylserine and PI4P in a mutually exclusive manner. This chain is Oxysterol-binding protein homolog 7, found in Saccharomyces cerevisiae (strain ATCC 204508 / S288c) (Baker's yeast).